Reading from the N-terminus, the 275-residue chain is ADP-dependent (S)-NAD(P)H-hydrate dehydratase (275 aa).

One can recognise a YjeF C-terminal domain in the interval 5-273; that stretch reads TDEILAKVIK…EEIPLFMKKY (269 aa). Positions 40, 103, and 151 each coordinate (6S)-NADPHX. Gly-214 contacts AMP. Asp-215 serves as a coordination point for (6S)-NADPHX.

Belongs to the NnrD/CARKD family. As to quaternary structure, homotetramer. It depends on Mg(2+) as a cofactor.

It catalyses the reaction (6S)-NADHX + ADP = AMP + phosphate + NADH + H(+). The catalysed reaction is (6S)-NADPHX + ADP = AMP + phosphate + NADPH + H(+). Catalyzes the dehydration of the S-form of NAD(P)HX at the expense of ADP, which is converted to AMP. Together with NAD(P)HX epimerase, which catalyzes the epimerization of the S- and R-forms, the enzyme allows the repair of both epimers of NAD(P)HX, a damaged form of NAD(P)H that is a result of enzymatic or heat-dependent hydration. The protein is ADP-dependent (S)-NAD(P)H-hydrate dehydratase of Lactococcus lactis subsp. lactis (strain IL1403) (Streptococcus lactis).